The primary structure comprises 602 residues: Probable beta-glucosidase btgE (602 aa).

The signal sequence occupies residues 1–18 (MRGAFLAAAAAVAGTAMA). Disordered regions lie at residues 61–94 (PPTL…SVVT) and 116–166 (GVDA…TSFS). A compositionally biased stretch (low complexity) spans 74–94 (PSSSSSSEVPSVPSSESSVVT). Over residues 152-166 (TSESPLPTPGVTSFS) the composition is skewed to polar residues. Glu443 (proton donor) is an active-site residue. Glu538 serves as the catalytic Nucleophile.

Belongs to the glycosyl hydrolase 17 family.

It localises to the secreted. It is found in the cell wall. The enzyme catalyses Hydrolysis of terminal, non-reducing beta-D-glucosyl residues with release of beta-D-glucose.. The protein operates within glycan metabolism; cellulose degradation. In terms of biological role, beta-glucosidases are one of a number of cellulolytic enzymes involved in the degradation of cellulosic biomass. Catalyzes the last step releasing glucose from the inhibitory cellobiose. The protein is Probable beta-glucosidase btgE (btgE) of Aspergillus flavus (strain ATCC 200026 / FGSC A1120 / IAM 13836 / NRRL 3357 / JCM 12722 / SRRC 167).